The following is a 431-amino-acid chain: Serine hydroxymethyltransferase 1 (431 aa).

(6S)-5,6,7,8-tetrahydrofolate is bound by residues Leu127 and Gly131–Leu133. At Lys236 the chain carries N6-(pyridoxal phosphate)lysine. Glu252 is a (6S)-5,6,7,8-tetrahydrofolate binding site.

The protein belongs to the SHMT family. In terms of assembly, homodimer. Requires pyridoxal 5'-phosphate as cofactor.

The protein resides in the cytoplasm. The catalysed reaction is (6R)-5,10-methylene-5,6,7,8-tetrahydrofolate + glycine + H2O = (6S)-5,6,7,8-tetrahydrofolate + L-serine. It participates in one-carbon metabolism; tetrahydrofolate interconversion. The protein operates within amino-acid biosynthesis; glycine biosynthesis; glycine from L-serine: step 1/1. Functionally, catalyzes the reversible interconversion of serine and glycine with tetrahydrofolate (THF) serving as the one-carbon carrier. This reaction serves as the major source of one-carbon groups required for the biosynthesis of purines, thymidylate, methionine, and other important biomolecules. Also exhibits THF-independent aldolase activity toward beta-hydroxyamino acids, producing glycine and aldehydes, via a retro-aldol mechanism. The chain is Serine hydroxymethyltransferase 1 from Rhizobium meliloti (strain 1021) (Ensifer meliloti).